The chain runs to 31 residues: Cyclotide psybry B (31 aa).

The cyclopeptide (Gly-Asn) cross-link spans 1 to 31 (GFNPCGETCWNKPTCHAPGCTCSIANICVRN). 3 disulfides stabilise this stretch: cysteine 5-cysteine 20, cysteine 9-cysteine 22, and cysteine 15-cysteine 28.

This is a cyclic peptide.

Probably participates in a plant defense mechanism. This is Cyclotide psybry B from Psychotria brachyceras.